Reading from the N-terminus, the 184-residue chain is MIRELEYYGSPTLRRKAEAILEITDEIRQLAQDMYETMVAHKGVGLAAPQVGESVSLFVMCVEGETEDGDLIFCDFPKVYINPVLSNVSEDLVLGREGCLSIPGLRADVYRPRSITVKAINLDGQEFTEHLEGFPARIVMHENDHLNGILYIDKMEEPKDYKKFKSALEKIRRRYNNHITDKAS.

The Fe cation site is built by cysteine 99 and histidine 141. Glutamate 142 is an active-site residue. Histidine 145 serves as a coordination point for Fe cation.

Belongs to the polypeptide deformylase family. The cofactor is Fe(2+).

The catalysed reaction is N-terminal N-formyl-L-methionyl-[peptide] + H2O = N-terminal L-methionyl-[peptide] + formate. In terms of biological role, removes the formyl group from the N-terminal Met of newly synthesized proteins. Requires at least a dipeptide for an efficient rate of reaction. N-terminal L-methionine is a prerequisite for activity but the enzyme has broad specificity at other positions. This is Peptide deformylase from Chlamydia abortus (strain DSM 27085 / S26/3) (Chlamydophila abortus).